A 453-amino-acid polypeptide reads, in one-letter code: Ribosomal protein uS12 methylthiotransferase RimO (453 aa).

The MTTase N-terminal domain occupies 5 to 120 (PKVGFVSLGC…VMQAVHSHLP (116 aa)). [4Fe-4S] cluster-binding residues include C14, C50, C79, C151, C155, and C158. Residues 137-382 (LTPRHYAYLK…MEVAEEVSAN (246 aa)) enclose the Radical SAM core domain. Residues 385–453 (QRKVGKTLKV…ADGHDLWGEV (69 aa)) enclose the TRAM domain.

This sequence belongs to the methylthiotransferase family. RimO subfamily. Requires [4Fe-4S] cluster as cofactor.

Its subcellular location is the cytoplasm. The catalysed reaction is L-aspartate(89)-[ribosomal protein uS12]-hydrogen + (sulfur carrier)-SH + AH2 + 2 S-adenosyl-L-methionine = 3-methylsulfanyl-L-aspartate(89)-[ribosomal protein uS12]-hydrogen + (sulfur carrier)-H + 5'-deoxyadenosine + L-methionine + A + S-adenosyl-L-homocysteine + 2 H(+). Its function is as follows. Catalyzes the methylthiolation of an aspartic acid residue of ribosomal protein uS12. The sequence is that of Ribosomal protein uS12 methylthiotransferase RimO from Burkholderia lata (strain ATCC 17760 / DSM 23089 / LMG 22485 / NCIMB 9086 / R18194 / 383).